Reading from the N-terminus, the 93-residue chain is Small ribosomal subunit protein uS19 (93 aa).

The protein belongs to the universal ribosomal protein uS19 family.

In terms of biological role, protein S19 forms a complex with S13 that binds strongly to the 16S ribosomal RNA. This Campylobacter concisus (strain 13826) protein is Small ribosomal subunit protein uS19.